Reading from the N-terminus, the 420-residue chain is Maturation protein A2 (420 aa).

RNA-binding stretches follow at residues 158-176 (IKYL…RAVK), 226-236 (QNRHDKIQRLL), and 294-298 (PVSDW).

It belongs to the Leviviricetes maturation protein family. In terms of assembly, interacts with host MurA; this interaction inhibits the first step in host cell wall synthesis. Interacts with the capsid protein.

It localises to the virion. Its function is as follows. Induces host cell lysis. Inhibits host MurA activity thereby blocking the synthesis of murein precursors necessary for the host cell wall biosynthesis. May be responsible for the attachment to the host pilus. Makes extensive contacts with the viral genome. The sequence is that of Maturation protein A2 from Escherichia virus Qbeta (Bacteriophage Q-beta).